A 254-amino-acid polypeptide reads, in one-letter code: uncharacterized protein (254 aa).

A coiled-coil region spans residues D66–A111.

This is an uncharacterized protein from Ostreid herpesvirus 1 (isolate France) (OsHV-1).